A 635-amino-acid chain; its full sequence is 5-aminolevulinate synthase, non-specific, mitochondrial (635 aa).

The transit peptide at 1 to 56 directs the protein to the mitochondrion; it reads MEAVVRRCPFLARVSQAFLQKAGPSLLFYAQHCPKMMEAAPPAAARGLATSASRGQ. Over residues 44 to 66 the composition is skewed to low complexity; it reads AARGLATSASRGQQVEETPAAQP. A disordered region spans residues 44 to 94; the sequence is AARGLATSASRGQQVEETPAAQPEAKKAKEVAQQNTDGSQPPAGHPPAAAV. Substrate-binding residues include arginine 212, serine 329, and lysine 348. Pyridoxal 5'-phosphate contacts are provided by serine 381, histidine 409, and threonine 437. The active site involves lysine 440. Lysine 440 is modified (N6-(pyridoxal phosphate)lysine). Positions 469 and 470 each coordinate pyridoxal 5'-phosphate. Threonine 557 provides a ligand contact to substrate.

The protein belongs to the class-II pyridoxal-phosphate-dependent aminotransferase family. In terms of assembly, homodimer. The cofactor is pyridoxal 5'-phosphate. Ubiquitous.

Its subcellular location is the mitochondrion inner membrane. The enzyme catalyses succinyl-CoA + glycine + H(+) = 5-aminolevulinate + CO2 + CoA. It participates in porphyrin-containing compound metabolism; protoporphyrin-IX biosynthesis; 5-aminolevulinate from glycine: step 1/1. In terms of biological role, catalyzes the pyridoxal 5'-phosphate (PLP)-dependent condensation of succinyl-CoA and glycine to form aminolevulinic acid (ALA), with CoA and CO2 as by-products. This is 5-aminolevulinate synthase, non-specific, mitochondrial (ALAS1) from Gallus gallus (Chicken).